Reading from the N-terminus, the 593-residue chain is MTLKIGGIVPIVRVMRDTIIQRPVSTFVRYHSKRSRSFKKKANHKPGQVIRSKLGKTLEAPKTQPKLFSFGNFSGLDQPENKLKEMSSNAIKNITSFESLRIFPTVRSAMLEEIKYGYNLKSTYIKSKEELEIKPSPVQIAAIRKINQPRLRNVNAEKKLADKKASGQEILEDLQKSNEMNRLKIFTIAAETGSGKTWAYLAPLLSKLKEEDMRVFNMSEQSYADAKKTSIIRSVILLPTHELVEQVYDSLKRASKASIDLEASVNKKILQDPQYARYLSLPENQTSLNLNVVKWGSGDSHQKLFDAGRKRIDVLVTTPAKIQGLAKLNNVSRPFRLFNFVEYCVVDEADTLMDKSWIVDTTSVIRRLSKCKDLIFCSATIPKEFKKTLGKMFPDEFSIINIVTPSLHKIPKQINLKVIDAQLSPYNGSKTRCLAQALYAIHNDGTEQGYVKRILVFVNEKRDVQPLADTLIEKFGHREEDIIGITGADNADDRLAKIEPFLKPAELLEEDLDGSKVKVLITTDLLARGLNFNGIKNVILMDLPNTSVDLVHRVGRTGRMRQSGRVFVIIDKKTGKSWIKGLPKVIKKGIPLG.

The N-terminal 36 residues, 1 to 36, are a transit peptide targeting the mitochondrion; sequence MTLKIGGIVPIVRVMRDTIIQRPVSTFVRYHSKRSR. A Q motif motif is present at residues 132-139; sequence EIKPSPVQ. The 223-residue stretch at 177-399 folds into the Helicase ATP-binding domain; that stretch reads SNEMNRLKIF…GKMFPDEFSI (223 aa). 190–197 is a binding site for ATP; sequence AETGSGKT. Positions 347-350 match the DEAD box motif; the sequence is DEAD. In terms of domain architecture, Helicase C-terminal spans 433 to 593; it reads CLAQALYAIH…KVIKKGIPLG (161 aa).

It belongs to the DEAD box helicase family. MRH4 subfamily.

It is found in the mitochondrion. The enzyme catalyses ATP + H2O = ADP + phosphate + H(+). ATP-binding RNA helicase involved in mitochondrial RNA metabolism. Required for maintenance of mitochondrial DNA. This Debaryomyces hansenii (strain ATCC 36239 / CBS 767 / BCRC 21394 / JCM 1990 / NBRC 0083 / IGC 2968) (Yeast) protein is ATP-dependent RNA helicase MRH4, mitochondrial (MRH4).